Here is a 222-residue protein sequence, read N- to C-terminus: Guanylate kinase (222 aa).

A Guanylate kinase-like domain is found at 19–197 (GFLFILSSPS…SVSLIKSIYL (179 aa)). 26–33 (SPSGAGKS) contributes to the ATP binding site.

Belongs to the guanylate kinase family.

The protein resides in the cytoplasm. It catalyses the reaction GMP + ATP = GDP + ADP. Its function is as follows. Essential for recycling GMP and indirectly, cGMP. The sequence is that of Guanylate kinase from Bartonella henselae (strain ATCC 49882 / DSM 28221 / CCUG 30454 / Houston 1) (Rochalimaea henselae).